A 446-amino-acid chain; its full sequence is Divalent metal cation transporter MntH (446 aa).

11 consecutive transmembrane segments (helical) span residues 32–52 (FSFL…GNWI), 59–79 (AQFG…AMLL), 107–127 (AFVF…AEVI), 139–159 (IPLL…LFIM), 168–188 (AIVG…VFIA), 210–230 (GALF…NLYL), 264–284 (SIAF…FFGV), 303–323 (PLLG…ALLA), 355–375 (LITR…FNSN), 381–401 (QLLV…LIPL), and 420–440 (VNII…YLII).

Belongs to the NRAMP family.

The protein localises to the cell membrane. Its function is as follows. H(+)-stimulated, divalent metal cation uptake system. The sequence is that of Divalent metal cation transporter MntH from Staphylococcus saprophyticus subsp. saprophyticus (strain ATCC 15305 / DSM 20229 / NCIMB 8711 / NCTC 7292 / S-41).